The following is a 98-amino-acid chain: Class II hydrophobin 1 (98 aa).

The signal sequence occupies residues 1-16 (MQFFTTVVLFAAAAMA). 4 disulfides stabilise this stretch: Cys-29–Cys-79, Cys-39–Cys-70, Cys-40–Cys-52, and Cys-80–Cys-92.

It belongs to the cerato-ulmin hydrophobin family. In terms of assembly, homodimer. Homodimers further self-assemble to form highly ordered films at water-air interfaces through intermolecular interactions. Expressed in mycelium, conidiating mycelium and aerial hyphae.

It localises to the secreted. The protein resides in the cell wall. Aerial growth, conidiation, and dispersal of filamentous fungi in the environment rely upon a capability of their secreting small amphipathic proteins called hydrophobins (HPBs) with low sequence identity. Class I can self-assemble into an outermost layer of rodlet bundles on aerial cell surfaces, conferring cellular hydrophobicity that supports fungal growth, development and dispersal; whereas Class II form highly ordered films at water-air interfaces through intermolecular interactions but contribute nothing to the rodlet structure. Hyd1 is a class II hydrophobin that plays probably a role during conidiophore development and in intraspecific signaling or hyphal fusion. Hyd1 and Hyd3 are jointly required for conidial hydrophobicity and dispersal, but seem not to be involved in mycelia hydrophobicity. Inhibits conidial germination in environments not suitable for mycelial growth. Not necessary for root adhesion and colonization. This Bionectria ochroleuca (Gliocladium roseum) protein is Class II hydrophobin 1.